The sequence spans 113 residues: Large ribosomal subunit protein uL18 (113 aa).

This sequence belongs to the universal ribosomal protein uL18 family. In terms of assembly, part of the 50S ribosomal subunit; part of the 5S rRNA/L5/L18/L25 subcomplex. Contacts the 5S and 23S rRNAs.

This is one of the proteins that bind and probably mediate the attachment of the 5S RNA into the large ribosomal subunit, where it forms part of the central protuberance. The chain is Large ribosomal subunit protein uL18 from Phocaeicola vulgatus (strain ATCC 8482 / DSM 1447 / JCM 5826 / CCUG 4940 / NBRC 14291 / NCTC 11154) (Bacteroides vulgatus).